Consider the following 327-residue polypeptide: F-box/LRR-repeat protein At3g58900 (327 aa).

The 47-residue stretch at 1–47 (MDLFSSLPNELLYHILSFLSTKEAALTSVLSKRWRNLFAFVPYLEFD) folds into the F-box domain. 5 LRR repeats span residues 116 to 144 (DLFI…RVGS), 161 to 192 (KTLV…DMTN), 199 to 230 (NVTV…SFDA), 235 to 261 (YFYY…QINL), and 277 to 308 (EMLV…YLSP).

The polypeptide is F-box/LRR-repeat protein At3g58900 (Arabidopsis thaliana (Mouse-ear cress)).